The sequence spans 882 residues: Exo-beta-D-glucosaminidase ARB_07888 (882 aa).

Positions 1 to 21 (MWFVFRPAAIPALLLTLGVSA) are cleaved as a signal peptide. Residues 22-31 (LSPLRPLVST) constitute a propeptide that is removed on maturation. 6 N-linked (GlcNAc...) asparagine glycosylation sites follow: N86, N200, N234, N237, N287, and N442. The active-site Proton donor is the D466. Catalysis depends on E538, which acts as the Nucleophile. N688, N773, and N816 each carry an N-linked (GlcNAc...) asparagine glycan.

Belongs to the glycosyl hydrolase 2 family. In terms of assembly, monomer.

The protein localises to the secreted. The enzyme catalyses Hydrolysis of chitosan or chitosan oligosaccharides to remove successive D-glucosamine residues from the non-reducing termini.. Functionally, hydrolyzes chitosan and chitooligosaccharides with retention of anomeric configuration. The sequence is that of Exo-beta-D-glucosaminidase ARB_07888 from Arthroderma benhamiae (strain ATCC MYA-4681 / CBS 112371) (Trichophyton mentagrophytes).